Here is a 288-residue protein sequence, read N- to C-terminus: Protein sprouty homolog 3 (288 aa).

An SPR domain is found at 154 to 267 (KCVPCTAVRP…PGCRCKRHTN (114 aa)).

Belongs to the sprouty family. Interacts with TESK1. Interacts with USP11. Interacts with CAV1 (via C-terminus). In terms of tissue distribution, expressed in the brain with expression the highest in Purkinje cell bodies and projections in the cerebellum (at protein level). Also expressed in central and peripheral nervous system ganglion cells, superior cervical ganglion and dorsal root ganglion (at protein level). Expressed in the retinal ganglion cell layer and the inner nuclear layer (at protein level).

The protein resides in the cytoplasm. Functionally, inhibits neurite branching, arbor length and neurite complexity. Inhibits EGF-mediated p42/44 ERK signaling. Negatively regulates the MAPK cascade, resulting in a reduction of extracellular matrix protein accumulation. May function as an antagonist of fibroblast growth factor (FGF) pathways and may negatively modulate respiratory organogenesis. The chain is Protein sprouty homolog 3 from Mus musculus (Mouse).